The following is a 146-amino-acid chain: NADH-quinone oxidoreductase subunit A (146 aa).

3 helical membrane passes run 16-36, 68-88, and 98-118; these read FAIF…GGWF, FYLV…LFAW, and VGFV…VYLV.

Belongs to the complex I subunit 3 family. As to quaternary structure, NDH-1 is composed of 13 different subunits. Subunits NuoA, H, J, K, L, M, N constitute the membrane sector of the complex.

Its subcellular location is the cell inner membrane. The catalysed reaction is a quinone + NADH + 5 H(+)(in) = a quinol + NAD(+) + 4 H(+)(out). Its function is as follows. NDH-1 shuttles electrons from NADH, via FMN and iron-sulfur (Fe-S) centers, to quinones in the respiratory chain. The immediate electron acceptor for the enzyme in this species is believed to be ubiquinone. Couples the redox reaction to proton translocation (for every two electrons transferred, four hydrogen ions are translocated across the cytoplasmic membrane), and thus conserves the redox energy in a proton gradient. In Enterobacter sp. (strain 638), this protein is NADH-quinone oxidoreductase subunit A.